The chain runs to 323 residues: Annexin A3 (323 aa).

Position 2 is an N-acetylalanine (Ala-2). Annexin repeat units follow at residues 18 to 89, 90 to 161, 173 to 245, and 249 to 320; these read FSPS…ALVT, APAL…TLAD, HLAK…AIVH, and NTPA…KICG. Position 177 is an N6-acetyllysine (Lys-177). Thr-267 is subject to Phosphothreonine.

The protein belongs to the annexin family.

Its function is as follows. Inhibitor of phospholipase A2, also possesses anti-coagulant properties. This chain is Annexin A3 (Anxa3), found in Mus musculus (Mouse).